A 394-amino-acid polypeptide reads, in one-letter code: MSKEKFERTKPHVNVGTIGHVDHGKTTLTAAITTVLAKHYGGAARAFDQIDNAPEEKARGITINTSHVEYDTPTRHYAHVDCPGHADYVKNMITGAAQMDGAILVVAATDGPMPQTREHILLGRQVGVPYIIVFLNKCDMVDDEELLELVEMEVRELLSQYDFPGDDTPIVRGSALQALNGVAEWEEKILELANHLDTYIPEPERAIDQPFLLPIEDVFSISGRGTVVTGRVERGIIRTGDEVEIVGIKDTAKTTVTGVEMFRKLLDEGRAGENIGALLRGTKREEIERGQVLAKPGSITPHTDFESEVYVLSKDEGGRHTPFFKGYRPQFYFRTTDVTGTIELPEGVEMVMPGDNIKMTVSLIHPIAMDQGLRFAIREGGRTVGAGVVAKIIK.

The region spanning 10–204 (KPHVNVGTIG…HLDTYIPEPE (195 aa)) is the tr-type G domain. The G1 stretch occupies residues 19-26 (GHVDHGKT). A GTP-binding site is contributed by 19–26 (GHVDHGKT). Residue threonine 26 coordinates Mg(2+). Residues 60-64 (GITIN) are G2. A G3 region spans residues 81-84 (DCPG). GTP is bound by residues 81–85 (DCPGH) and 136–139 (NKCD). The tract at residues 136-139 (NKCD) is G4. Positions 174-176 (SAL) are G5.

It belongs to the TRAFAC class translation factor GTPase superfamily. Classic translation factor GTPase family. EF-Tu/EF-1A subfamily. Monomer.

It is found in the cytoplasm. It catalyses the reaction GTP + H2O = GDP + phosphate + H(+). Functionally, GTP hydrolase that promotes the GTP-dependent binding of aminoacyl-tRNA to the A-site of ribosomes during protein biosynthesis. The polypeptide is Elongation factor Tu 2 (Haemophilus influenzae (strain 86-028NP)).